Reading from the N-terminus, the 286-residue chain is Probable glucose uptake protein GlcU (286 aa).

10 consecutive transmembrane segments (helical) span residues 4–22, 27–49, 53–72, 85–107, 111–133, 154–176, 181–198, 211–228, 233–255, and 267–284; these read IFLAILPAIFWGSIVLFNV, GPYSQTLGTTFGALIFSIVVYIF, VLTPTVIGVGVVSGLFWALG, VSRTMPISTGLQLVATTLFGVIV, WSTTISVVLGILALVCIIIGVIL, IVILLISTVGYLVYVVVIRLFNV, ALLPQAVGMVLGGILLTF, IIPGLIWAAGNMFLFISQ, VATSFSLSQMGIIISTLGGILIL, and IVVGIVFIIAAGIMLGIA.

It belongs to the GRP transporter (TC 2.A.7.5) family.

Its subcellular location is the cell membrane. In terms of biological role, involved in the uptake of glucose. The protein is Probable glucose uptake protein GlcU (glcU) of Bacillus cereus (strain ATCC 14579 / DSM 31 / CCUG 7414 / JCM 2152 / NBRC 15305 / NCIMB 9373 / NCTC 2599 / NRRL B-3711).